A 299-amino-acid chain; its full sequence is ATP phosphoribosyltransferase (299 aa).

This sequence belongs to the ATP phosphoribosyltransferase family. Long subfamily. Equilibrium between an active dimeric form, an inactive hexameric form and higher aggregates. Interconversion between the various forms is largely reversible and is influenced by the natural substrates and inhibitors of the enzyme. Mg(2+) serves as cofactor.

Its subcellular location is the cytoplasm. It carries out the reaction 1-(5-phospho-beta-D-ribosyl)-ATP + diphosphate = 5-phospho-alpha-D-ribose 1-diphosphate + ATP. The protein operates within amino-acid biosynthesis; L-histidine biosynthesis; L-histidine from 5-phospho-alpha-D-ribose 1-diphosphate: step 1/9. Feedback inhibited by histidine. Its function is as follows. Catalyzes the condensation of ATP and 5-phosphoribose 1-diphosphate to form N'-(5'-phosphoribosyl)-ATP (PR-ATP). Has a crucial role in the pathway because the rate of histidine biosynthesis seems to be controlled primarily by regulation of HisG enzymatic activity. This chain is ATP phosphoribosyltransferase, found in Buchnera aphidicola subsp. Acyrthosiphon pisum (strain 5A).